The chain runs to 235 residues: MKAAIIGAMEEEVAILRSRMEGCEETVIAGCEFSKGRLDGVEAVLLKSGIGKVNAAMGTTLLLDHFRPDFVINTGSAGGFLPSLRVGDLVISEEVVHHDVDVTAFGYAYGQVPGLPARYRADEALVEAAKQAAARLDGLQAVTGLIATGDSFMNDPKRVEFVRGQFPELCAVEMEAAAIAQVCVQFGTPFVIIRALSDIAGEESGVSFEQFLETAAKHSAELVLSMLSVMKQKRY.

Glu-12 (proton acceptor) is an active-site residue. Substrate is bound by residues Gly-78, Met-153, and 174 to 175 (ME). Asp-198 serves as the catalytic Proton donor.

Belongs to the PNP/UDP phosphorylase family. MtnN subfamily.

The catalysed reaction is S-adenosyl-L-homocysteine + H2O = S-(5-deoxy-D-ribos-5-yl)-L-homocysteine + adenine. It catalyses the reaction S-methyl-5'-thioadenosine + H2O = 5-(methylsulfanyl)-D-ribose + adenine. The enzyme catalyses 5'-deoxyadenosine + H2O = 5-deoxy-D-ribose + adenine. The protein operates within amino-acid biosynthesis; L-methionine biosynthesis via salvage pathway; S-methyl-5-thio-alpha-D-ribose 1-phosphate from S-methyl-5'-thioadenosine (hydrolase route): step 1/2. Its function is as follows. Catalyzes the irreversible cleavage of the glycosidic bond in both 5'-methylthioadenosine (MTA) and S-adenosylhomocysteine (SAH/AdoHcy) to adenine and the corresponding thioribose, 5'-methylthioribose and S-ribosylhomocysteine, respectively. Also cleaves 5'-deoxyadenosine, a toxic by-product of radical S-adenosylmethionine (SAM) enzymes, into 5-deoxyribose and adenine. This Geobacillus kaustophilus (strain HTA426) protein is 5'-methylthioadenosine/S-adenosylhomocysteine nucleosidase.